The chain runs to 461 residues: Proline--tRNA ligase (461 aa).

Belongs to the class-II aminoacyl-tRNA synthetase family. ProS type 3 subfamily. In terms of assembly, homodimer.

Its subcellular location is the cytoplasm. It carries out the reaction tRNA(Pro) + L-proline + ATP = L-prolyl-tRNA(Pro) + AMP + diphosphate. Its function is as follows. Catalyzes the attachment of proline to tRNA(Pro) in a two-step reaction: proline is first activated by ATP to form Pro-AMP and then transferred to the acceptor end of tRNA(Pro). This chain is Proline--tRNA ligase, found in Methanococcus vannielii (strain ATCC 35089 / DSM 1224 / JCM 13029 / OCM 148 / SB).